The chain runs to 88 residues: MMSKMGAMFVLLLLFTLASSLQEGDVQARKTRLKSDFYRALARDDRGCTRTCGGPKCTGTCTCTNSSKCGCRYNVHPSGWGCGCACSG.

Positions 1-20 (MMSKMGAMFVLLLLFTLASS) are cleaved as a signal peptide. Positions 21–46 (LQEGDVQARKTRLKSDFYRALARDDR) are excised as a propeptide. Position 55 is a 4-hydroxyproline (Pro55). Trp80 is subject to 6'-bromotryptophan. The residue at position 87 (Ser87) is a Serine amide.

This sequence belongs to the conotoxin S superfamily. Contains 5 disulfide bonds. In terms of tissue distribution, expressed by the venom duct.

It localises to the secreted. Its function is as follows. Sigma-conotoxins bind and inhibit serotonin-gated ion channels. This peptide selectively and reversibly inhibits 5-hydroxytryptamine 3 receptor (HTR3A) through competitive antagonism (IC(50)=53-86.8 nM). The chain is Sigma-conotoxin GVIIIA from Conus geographus (Geography cone).